Consider the following 288-residue polypeptide: HTH-type transcriptional regulator CzcR (288 aa).

In terms of domain architecture, HTH lysR-type spans 1-58 (MELRDLQIFQSVADQGSVSSAAKELNYVQSNVTARIKQLENELKTPLFYRHKRGMTLT). Residues 18 to 37 (VSSAAKELNYVQSNVTARIK) constitute a DNA-binding region (H-T-H motif).

Belongs to the LysR transcriptional regulatory family.

The polypeptide is HTH-type transcriptional regulator CzcR (czcR) (Bacillus anthracis).